We begin with the raw amino-acid sequence, 375 residues long: Terpene cyclase braA (375 aa).

Positions 116, 264, and 268 each coordinate Mg(2+). Residues Asp-116 to Asp-120 carry the D(D/E)XX(D/E) motif motif. Residues Asn-264–Glu-272 carry the NSE motif motif. Positions Trp-348 to Tyr-355 match the WxxxxxRY motif motif. Arg-354 and Tyr-355 together coordinate (2E,6E)-farnesyl diphosphate.

The protein belongs to the terpene synthase family. In terms of assembly, homodimer. Requires Mg(2+) as cofactor.

It catalyses the reaction (2E,6E)-farnesyl diphosphate + H2O = trichobrasilenol + diphosphate. It functions in the pathway secondary metabolite biosynthesis. Functionally, terpene cyclase; part of the gene cluster that mediates the biosynthesis of the brasilane terpene glycosides brasilane D and E. The biosynthesis starts with the activity of the terpene cyclase braA that converts farnesyl pyrophosphate into the sesquiterpene alcohol trichobrasilenol. Subsequently, trichobrasilenol is glycosylated by the O-glycosyltransferase braB putatively using UDP-GlcNAc as sugar donor to yield brasilane A. The latter then undergoes two rounds of oxidation performed by the cytochrome P450 monooxygenase braC. In the first round braC hydroxylates C-12 forming brasilane D, which serves as substrate in the second round to establish the epoxide at the bond between C-5 and C-10 and oxidize the alcohol at C-12 to an aldehyde leading to the final product brasilane E. In Annulohypoxylon truncatum (Hypoxylon truncatum), this protein is Terpene cyclase braA.